The sequence spans 683 residues: Synaptic vesicle glycoprotein 2B (683 aa).

The segment at 1-42 (MDDYKYQDNYGGYAPSDGYYRGNESNPEEDAQSDVTEGHDEE) is disordered. At 1–108 (MDDYKYQDNY…MDECGHGRFQ (108 aa)) the chain is on the cytoplasmic side. Serine 33 carries the post-translational modification Phosphoserine. Threonine 36 carries the phosphothreonine modification. Residues 109 to 129 (WILFFVLGLALMADGVEVFVV) form a helical membrane-spanning segment. The Extracellular portion of the chain corresponds to 130 to 148 (SFALPSAEKDMCLSSSKKG). A helical membrane pass occupies residues 149–169 (MLGMIVYLGMMAGAFILGGLA). The Cytoplasmic portion of the chain corresponds to 170–182 (DKLGRKRVLSMSL). Residues 183–203 (AVNASFASLSSFVQGYGAFLF) form a helical membrane-spanning segment. The Extracellular segment spans residues 204-205 (CR). The helical transmembrane segment at 206–226 (LISGIGIGGALPIVFAYFSEF) threads the bilayer. At 227 to 237 (LSREKRGEHLS) the chain is on the cytoplasmic side. Residues 238 to 258 (WLGIFWMTGGLYASAMAWSII) form a helical membrane-spanning segment. Residues 259-277 (PHYGWGFSMGTNYHFHSWR) lie on the Extracellular side of the membrane. The chain crosses the membrane as a helical span at residues 278–298 (VFVIVCALPCTVSMVALKFMP). Residues 299 to 390 (ESPRFLLEMG…CVMGPYRMNT (92 aa)) lie on the Cytoplasmic side of the membrane. The chain crosses the membrane as a helical span at residues 391-411 (LILAVVWFAMAFSYYGLTVWF). The Extracellular segment spans residues 412–535 (PDMIRYFQDE…CHMDLEQDND (124 aa)). Tyrosine 423 is subject to Phosphotyrosine. 3 N-linked (GlcNAc...) asparagine glycosylation sites follow: asparagine 441, asparagine 491, and asparagine 516. Residues 536 to 556 (FLIYLVSFLGSLSVLPGNIIS) form a helical membrane-spanning segment. Residues 557–565 (ALLMDRIGR) lie on the Cytoplasmic side of the membrane. The helical transmembrane segment at 566–586 (LKMIGGSMLISAVCCFFLFFG) threads the bilayer. Residues 587-592 (NSESAM) are Extracellular-facing. Residues 593–613 (IGWQCLFCGTSIAAWNALDVI) traverse the membrane as a helical segment. The Cytoplasmic segment spans residues 614–626 (TVELYPTNQRATA). The chain crosses the membrane as a helical span at residues 627 to 649 (FGILNGLCKFGAILGNTIFASFV). Topologically, residues 650 to 653 (GITK) are extracellular. The chain crosses the membrane as a helical span at residues 654–672 (VVPILLAAASLVGGGLIAL). Topologically, residues 673 to 683 (RLPETREQVLM) are cytoplasmic.

The protein belongs to the major facilitator superfamily. In terms of assembly, interacts with SYT1 in a calcium-independent manner. Forms a complex with SYT1, syntaxin-1 and SNAP25. As to quaternary structure, (Microbial infection) Interacts with C.botulinum neurotoxin type A2 (BoNT/A, botA). Interaction is improved by glycosylation of SV2. Post-translationally, N-glycosylated. In terms of processing, the N-terminal cytoplasmic domain is phosphorylated by CK1.

Its subcellular location is the cytoplasmic vesicle. It is found in the secretory vesicle. The protein resides in the synaptic vesicle membrane. It localises to the acrosome. In terms of biological role, probably plays a role in the control of regulated secretion in neural and endocrine cells. (Microbial infection) Receptor for the C.botulinum neurotoxin type A2 (BoNT/A, botA); glycosylation is not essential but enhances the interaction. Probably also serves as a receptor for the closely related C.botulinum neurotoxin type A1. This chain is Synaptic vesicle glycoprotein 2B (SV2B), found in Homo sapiens (Human).